The sequence spans 480 residues: Caspase-8 (480 aa).

Residues M1–D218 constitute a propeptide that is removed on maturation. 2 DED domains span residues F3 to D80 and Y101 to D177. Phosphoserine occurs at positions 188 and 213. N6-acetyllysine is present on K226. H319 is a catalytic residue. A Phosphotyrosine modification is found at Y336. C362 is an active-site residue. The propeptide occupies F377–D387. At S389 the chain carries Phosphoserine; by CDK1.

The protein belongs to the peptidase C14A family. In terms of assembly, heterotetramer that consists of two anti-parallel arranged heterodimers, each one formed by a 18 kDa (p18) and a 10 kDa (p10) subunit. Component of the death-induced signaling complex (DISC) composed of cell surface receptor FAS/CD95 or TNFRSF1A, adapter protein FADD and the CASP8 protease; recruitment of CASP8 to the complex is required for processing of CASP8 into the p18 and p10 subunits. Component of the AIM2 PANoptosome complex, a multiprotein complex that drives inflammatory cell death (PANoptosis). Interacts with CFLAR and PEA15. Interacts with RFFL and RNF34; negatively regulate CASP8 through proteasomal degradation. Interacts with TNFAIP8L2. Interacts with CASP8AP2. Interacts with NOL3; decreases CASP8 activity in a mitochondria localization- and phosphorylation-dependent manner and this interaction is dissociated by calcium. Interacts with UBR2. Interacts with RIPK1. Interacts with stimulated TNFRSF10B; this interaction is followed by CASP8 proteolytic cleavage and activation. Post-translationally, generation of the subunits requires association with the death-inducing signaling complex (DISC), whereas additional processing is likely due to the autocatalytic activity of the activated protease. GZMB and CASP10 can be involved in these processing events. In terms of processing, (Microbial infection) Proteolytically cleaved by the cowpox virus CRMA death inhibitory protein. Phosphorylation on Ser-389 during mitosis by CDK1 inhibits activation by proteolysis and prevents apoptosis. This phosphorylation occurs in cancer cell lines, as well as in primary breast tissues and lymphocytes. Expressed in a wide variety of tissues. Highest expression in spleen, thymus, lung, liver and kidney. Lower expression in heart, brain, testis and skeletal muscle.

The protein resides in the cytoplasm. Its subcellular location is the nucleus. It catalyses the reaction Strict requirement for Asp at position P1 and has a preferred cleavage sequence of (Leu/Asp/Val)-Glu-Thr-Asp-|-(Gly/Ser/Ala).. With respect to regulation, CASP8 activity is restricted by RIPK1. (Microbial infection) Inhibited by baculovirus p35 protein P35. Its function is as follows. Thiol protease that plays a key role in programmed cell death by acting as a molecular switch for apoptosis, necroptosis and pyroptosis, and is required to prevent tissue damage during embryonic development and adulthood. Initiator protease that induces extrinsic apoptosis by mediating cleavage and activation of effector caspases responsible for FAS/CD95-mediated and TNFRSF1A-induced cell death. Cleaves and activates effector caspases CASP3, CASP4, CASP6, CASP7, CASP9 and CASP10. Binding to the adapter molecule FADD recruits it to either receptor FAS/CD95 or TNFRSF1A. The resulting aggregate called the death-inducing signaling complex (DISC) performs CASP8 proteolytic activation. The active dimeric enzyme is then liberated from the DISC and free to activate downstream apoptotic proteases. Proteolytic fragments of the N-terminal propeptide (termed CAP3, CAP5 and CAP6) are likely retained in the DISC. In addition to extrinsic apoptosis, also acts as a negative regulator of necroptosis: acts by cleaving RIPK1 at 'Asp-325', which is crucial to inhibit RIPK1 kinase activity, limiting TNF-induced apoptosis, necroptosis and inflammatory response. Also able to initiate pyroptosis by mediating cleavage and activation of gasdermin-C and -D (GSDMC and GSDMD, respectively): gasdermin cleavage promotes release of the N-terminal moiety that binds to membranes and forms pores, triggering pyroptosis. Initiates pyroptosis following inactivation of MAP3K7/TAK1. Also acts as a regulator of innate immunity by mediating cleavage and inactivation of N4BP1 downstream of TLR3 or TLR4, thereby promoting cytokine production. May participate in the Granzyme B (GZMB) cell death pathways. Cleaves PARP1 and PARP2. The chain is Caspase-8 from Mus musculus (Mouse).